The chain runs to 541 residues: MTNGGGGNNGAANRTEELQPHPVKEQLPGIQYCVNSPPPWLEAVVLGFQHYLLSLGITVLIPSVLVPLMGGGYAEKVKVIQTLLFVSGLTTLFQSFFGTRLPVIAVASYAYIIPITSIIYSTRFTYYTDPFERFVRTMRSIQGALIITGCFQVLICILGVWRNIVRFLSPLSIAPLATFTGLGLYHIGFPLLARCVEVGLPGLILLIFVTQYLPRFLKMKKGVMILDGSRCDRYGMILCIPLVWLFAQLLTSSGVYDHKSHTTQTSCRTDRTGLITNTPWIYIPYPFQWGSPTFDITDSFAMMAASFVTLFESTGLFYASARYGSATPIPPSVVSRGTCWLGVGVLLNGMLGGITGITTSTENVGLLAMTKIGSRRVIQISAAFMIFFSIFGKFGAFFASIPLPIMASLYCIVLCFVSSVGLSYLQFCNLNSFNIKFILGFSFFMAISIPQYFREYYNGGWRSDHHSNWLEDMIRVIFMSHTTVAAIIAIVLDCTLCRDSDEAKKDCGMKWWDKFRLYNLDVRNDEFYGLPCRLNKFFPSH.

12 consecutive transmembrane segments (helical) span residues 52–72, 79–99, 101–121, 141–161, 173–193, 196–216, 235–255, 299–319, 376–396, 397–417, 433–453, and 476–496; these read LLSLGITVLIPSVLVPLMGGG, VIQTLLFVSGLTTLFQSFFGT, LPVIAVASYAYIIPITSIIYS, IQGALIITGCFQVLICILGVW, IAPLATFTGLGLYHIGFPLLA, VEVGLPGLILLIFVTQYLPRF, GMILCIPLVWLFAQLLTSSGV, SFAMMAASFVTLFESTGLFYA, RVIQISAAFMIFFSIFGKFGA, FFASIPLPIMASLYCIVLCFV, FNIKFILGFSFFMAISIPQYF, and VIFMSHTTVAAIIAIVLDCTL.

The protein belongs to the nucleobase:cation symporter-2 (NCS2) (TC 2.A.40) family.

It is found in the membrane. This Arabidopsis thaliana (Mouse-ear cress) protein is Putative nucleobase-ascorbate transporter 10 (NAT10).